A 407-amino-acid chain; its full sequence is uncharacterized protein (407 aa).

Transmembrane regions (helical) follow at residues 22–42 (IVSV…PLAV), 51–71 (LGFS…ATLA), 101–121 (ALLL…GLLV), 126–146 (VLGI…IGRV), 154–174 (VISW…PVGV), 179–199 (ALIP…GYYL), 227–247 (GLGL…ITLY), 258–278 (LSLT…ANTI), 286–306 (VAIV…LAPV), 309–329 (VALV…PALG), 347–367 (AYSV…GYVA), and 369–389 (AFGY…GVAL).

Belongs to the major facilitator superfamily. YhhS family.

Its subcellular location is the cell inner membrane. This is an uncharacterized protein from Burkholderia mallei (strain NCTC 10229).